A 239-amino-acid chain; its full sequence is Octanoyltransferase (239 aa).

The region spanning 59–239 (PFSPQAVWLL…KRRFKLNWEK (181 aa)) is the BPL/LPL catalytic domain. Substrate contacts are provided by residues 101 to 108 (RGGEVTHH), 168 to 170 (SIG), and 181 to 183 (GFS). Catalysis depends on Cys199, which acts as the Acyl-thioester intermediate.

This sequence belongs to the LipB family.

It localises to the cytoplasm. It catalyses the reaction octanoyl-[ACP] + L-lysyl-[protein] = N(6)-octanoyl-L-lysyl-[protein] + holo-[ACP] + H(+). It participates in protein modification; protein lipoylation via endogenous pathway; protein N(6)-(lipoyl)lysine from octanoyl-[acyl-carrier-protein]: step 1/2. Catalyzes the transfer of endogenously produced octanoic acid from octanoyl-acyl-carrier-protein onto the lipoyl domains of lipoate-dependent enzymes. Lipoyl-ACP can also act as a substrate although octanoyl-ACP is likely to be the physiological substrate. The polypeptide is Octanoyltransferase (Prochlorococcus marinus (strain NATL2A)).